We begin with the raw amino-acid sequence, 286 residues long: Bifunctional protein FolD (286 aa).

NADP(+) contacts are provided by residues 163–165, Ile188, and Ile229; that span reads GMS.

It belongs to the tetrahydrofolate dehydrogenase/cyclohydrolase family. Homodimer.

The catalysed reaction is (6R)-5,10-methylene-5,6,7,8-tetrahydrofolate + NADP(+) = (6R)-5,10-methenyltetrahydrofolate + NADPH. The enzyme catalyses (6R)-5,10-methenyltetrahydrofolate + H2O = (6R)-10-formyltetrahydrofolate + H(+). Its pathway is one-carbon metabolism; tetrahydrofolate interconversion. Functionally, catalyzes the oxidation of 5,10-methylenetetrahydrofolate to 5,10-methenyltetrahydrofolate and then the hydrolysis of 5,10-methenyltetrahydrofolate to 10-formyltetrahydrofolate. The polypeptide is Bifunctional protein FolD (Helicobacter hepaticus (strain ATCC 51449 / 3B1)).